Here is a 108-residue protein sequence, read N- to C-terminus: UPF0060 membrane protein SA2130 (108 aa).

The next 4 membrane-spanning stretches (helical) occupy residues 5–25 (IFIFILAGLCEIGGGYLIWLW), 31–51 (SSLVGLIGGAILMLYGVIATF), 60–80 (VYAAYGGVFIIMSLIFAMVVD), and 86–106 (KYDVIGAIICIVGVLVMLLPS).

The protein belongs to the UPF0060 family.

It localises to the cell membrane. The sequence is that of UPF0060 membrane protein SA2130 from Staphylococcus aureus (strain N315).